Reading from the N-terminus, the 287-residue chain is Pirin-1 (287 aa).

Threonine 2 is modified (N-acetylthreonine).

Belongs to the pirin family. In terms of assembly, interacts with the G protein alpha-1 subunit GPA1. Interacts with NFYB6 and NFYB9.

The protein localises to the nucleus. In terms of biological role, involved in abscisic acid signal transduction. Plays a role in seed germination and early seedling development. Involved in the blue light (BL) signaling. This is Pirin-1 (PRN1) from Arabidopsis thaliana (Mouse-ear cress).